Here is a 302-residue protein sequence, read N- to C-terminus: L-threonate dehydrogenase (302 aa).

Residues 7-35 (FHVGIVGLGSMGMGAALSCVRAGLSTWGA) and Thr102 contribute to the NAD(+) site. Lys178 is a catalytic residue. Lys246 contacts NAD(+).

Belongs to the HIBADH-related family. L-threonate dehydrogenase subfamily.

It catalyses the reaction L-threonate + NAD(+) = 2-dehydro-L-erythronate + NADH + H(+). In terms of biological role, catalyzes oxidation of L-threonate to 2-oxo-tetronate. Can use either NAD(+) or NADP(+) as cosubstrate, with a preference for NAD(+). This is L-threonate dehydrogenase from Escherichia coli O6:H1 (strain CFT073 / ATCC 700928 / UPEC).